Here is a 181-residue protein sequence, read N- to C-terminus: Oligoribonuclease (181 aa).

The region spanning 8–171 (LIWIDLEMTG…DDIRESIAEL (164 aa)) is the Exonuclease domain. Tyr129 is a catalytic residue.

It belongs to the oligoribonuclease family.

The protein localises to the cytoplasm. Functionally, 3'-to-5' exoribonuclease specific for small oligoribonucleotides. The protein is Oligoribonuclease of Alcanivorax borkumensis (strain ATCC 700651 / DSM 11573 / NCIMB 13689 / SK2).